Reading from the N-terminus, the 281-residue chain is LC-AMP precursor 3 (281 aa).

The N-terminal stretch at 1–19 (MKYTIIPFLLLVALTCATA) is a signal peptide. Residues 20–56 (RSIDGSEKEVQEIREETPSSNEDVPFSLSANEDEEAR) constitute a propeptide that is removed on maturation. Leucine 74 carries the leucine amide modification. Positions 75 to 89 (GREESLSANEDEEAR) are excised as a propeptide. Position 114 is a serine amide (serine 114). The propeptide occupies 115–129 (GREESFSANEDEEER). At leucine 147 the chain carries Leucine amide. Positions 148–162 (GREESISANEDEETR) are excised as a propeptide. Leucine 180 is subject to Leucine amide. Residues 181 to 195 (GREESLSAIEDEEAR) constitute a propeptide that is removed on maturation. Position 213 is a leucine amide (leucine 213). Residues 214 to 228 (GREESLSANEDEEAR) constitute a propeptide that is removed on maturation. A Leucine amide modification is found at leucine 246. Residues 247-261 (GREESLSANEDEEAR) constitute a propeptide that is removed on maturation. Leucine 279 carries the post-translational modification Leucine amide.

In terms of tissue distribution, expressed by the venom gland.

It is found in the secreted. In terms of biological role, antimicrobial peptide that acts by influencing bacterial cell membrane permeability at low concentrations and by directly disrupting structure-function at high concentrations. Shows activity against Gram-negative bacteria (S.typhimurium CGMCC 1.1174 (MIC=2.5 uM), E.coli CCTCC AB 2018675 (MIC=5 uM), S.dysenteriae CGMCC 1.1869 (MIC=2.5 uM), P.aeruginosa CGMCC 1.596 (MIC 5-10 uM), K.pneumoniae (MIC=10 uM), A.baumannii (MIC=5-10 uM)), and Gram-positive bacteria (S.aureus CMCC 26003 or MRSA ATCC 43300 (MIC=5 uM), and E.faecium (MIC=2.5-5 uM)). Inhibits biofilm formation of E.coli and S.aureus in a dose-dependent manner and disrupts established biofilms. Demonstrates minimal bacterial resistance, excellent stability, negligible mammalian cell toxicity, low hemolytic activity, and appropriate selectivity for both normal and tumor cells. When combined with traditional antibiotics, exhibits additive or synergistic therapeutic effects. In vivo, in a neutropenic mouse thigh infection model, exhibits a therapeutic effect in inhibiting bacterial proliferation. This is LC-AMP precursor 3 from Lycosa coelestis (Wolf spider).